A 1205-amino-acid chain; its full sequence is Centrosome and spindle pole associated protein 1 (1205 aa).

2 coiled-coil regions span residues 12-34 (QKAK…EMKG) and 87-108 (KLKE…TQAK). Positions 16–37 (LAKDKAELESDPPYMEMKGKAS) are disordered. The segment covering 158-173 (STEKVRQVEKNIEPKS) has biased composition (basic and acidic residues). Disordered stretches follow at residues 158 to 187 (STEK…KSDL), 222 to 277 (SRRP…PGVS), and 380 to 467 (QQKK…GSTL). Residues 176–187 (NKNPISQGKSDL) show a composition bias toward polar residues. Basic and acidic residues-rich tracts occupy residues 222–233 (SRRPLKQTKEEV) and 257–275 (ANGE…RDPG). Residues 357-391 (EDRELTKRRKEKYRQELLEQIAEQQKKKRREKDLA) adopt a coiled-coil conformation. Composition is skewed to basic and acidic residues over residues 401–410 (DPEKSPDRLK) and 417–428 (RHFEEMPPERPR). At serine 405 the chain carries Phosphoserine. A compositionally biased stretch (pro residues) spans 433–447 (TPPPPFSAPSSPSVP). A coiled-coil region spans residues 574-618 (STQSLQSYQEALQEQIREREARRKKERLEKEEYEAKLEAEMRIYN). The disordered stretch occupies residues 677–704 (AENLEDSANKNSGPLQTQSSPFARGNTF). A compositionally biased stretch (polar residues) spans 685–697 (NKNSGPLQTQSSP). Positions 724 to 813 (RFQIEEKRQR…EKHNLQLQHY (90 aa)) form a coiled coil. Phosphoserine occurs at positions 850 and 869. The interval 862 to 881 (SSMSRAQSPPVPARKNQLRA) is disordered. The stretch at 874 to 911 (ARKNQLRAEEEKKNVIMELSEMRKQLRSEERRLQGRLL) forms a coiled coil. Serine 915 is modified (phosphoserine). Positions 993–1014 (QQQALLREQQKRLNRIKMRRDA) form a coiled coil. 3 disordered regions span residues 1086-1105 (GLDF…SLKS), 1124-1169 (RLTE…RPGT), and 1182-1205 (NEEQ…AAHA). Basic and acidic residues predominate over residues 1124–1134 (RLTEQQKKPTN). The segment covering 1135–1145 (TDDEGSLVDPD) has biased composition (acidic residues). Positions 1146–1156 (DIMRHLSDDGR) are enriched in basic and acidic residues.

In terms of assembly, interacts with PLEKHG6. Interacts with ARMC9, TOGARAM1, CCDC66, CEP104 and CEP290. Phosphorylated. Phosphorylation increases in colcemide-treated cells.

It is found in the cytoplasm. The protein resides in the cytoskeleton. It localises to the microtubule organizing center. The protein localises to the centrosome. Its subcellular location is the spindle. It is found in the spindle pole. The protein resides in the cell projection. It localises to the cilium. May play a role in cell-cycle-dependent microtubule organization. This Mus musculus (Mouse) protein is Centrosome and spindle pole associated protein 1 (Cspp1).